A 907-amino-acid chain; its full sequence is Glutamate receptor 1 (907 aa).

Positions 1–18 (MPYIFAFFCTGFLGAVVG) are cleaved as a signal peptide. Residues 19–536 (ANFPNNIQIG…GVFSFLDPLA (518 aa)) lie on the Extracellular side of the membrane. N-linked (GlcNAc...) asparagine glycans are attached at residues N63, N249, N257, N363, N401, and N406. Residues C75 and C323 are joined by a disulfide bond. Residues P492, T494, and R499 each contribute to the L-glutamate site. Residues 537–557 (YEIWMCIVFAYIGVSVVLFLV) traverse the membrane as a helical segment. The Cytoplasmic portion of the chain corresponds to 558 to 584 (SRFSPYEWHSEEFEEGRDQTTSDQSNE). The helical; Pore-forming intramembrane region spans 585–600 (FGIFNSLWFSLGAFMQ). An intramembrane segment occupies 601–603 (QGC). A lipid anchor (S-palmitoyl cysteine) is attached at C603. At 604 to 609 (DISPRS) the chain is on the cytoplasmic side. Residues 610–630 (LSGRIVGGVWWFFTLIIISSY) traverse the membrane as a helical segment. Topologically, residues 631–805 (TANLAAFLTV…DKTSALSLSN (175 aa)) are extracellular. S645 carries the phosphoserine modification. The L-glutamate site is built by S668 and T669. S710 carries the post-translational modification Phosphoserine; by PKC. E719 contacts L-glutamate. A disulfide bridge connects residues C732 and C787. The chain crosses the membrane as a helical span at residues 806-826 (VAGVFYILIGGLGLAMLVALI). The Cytoplasmic segment spans residues 827-907 (EFCYKSRSES…SGMPLGATGL (81 aa)). C829 is lipidated: S-palmitoyl cysteine. Position 849 is a phosphoserine; by PKC, PKA and CAMK2 (S849). The segment at 857–881 (STLPRNSGAGASGGGGSGENGRVVS) is disordered. The residue at position 863 (S863) is a Phosphoserine; by PKC, PKA and PKG/PRKG2. Gly residues predominate over residues 866 to 875 (GASGGGGSGE). The PDZ-binding signature appears at 904–907 (ATGL).

Belongs to the glutamate-gated ion channel (TC 1.A.10.1) family. GRIA1 subfamily. As to quaternary structure, homotetramer or heterotetramer of pore-forming glutamate receptor subunits; heteromeric assembly can be the result of both receptor subtype and flip-flop forms and according the composition, one partner can be dominant with respect to the fast desensitizing current component, whereas the other can determine the steady-state component. Tetramers may be formed by the dimerization of dimers. Found in a complex with GRIA2, GRIA3, GRIA4, CNIH2, CNIH3, CACNG2, CACNG3, CACNG4, CACNG5, CACNG7 and CACNG8. Interacts with HIP1 and RASGRF2. Interacts with SYNDIG1 and GRIA2. Interacts with DLG1 (via C-terminus). Interacts with LRFN1. Interacts with PRKG2. Interacts with CNIH2 and CACNG2. Interacts with CACNG5; this interaction modulates the gating. Interacts (via C-terminus) with PDLIM4 (via LIM domain); this interaction as well as the interaction of PDLIM4 with alpha-actinin is required for their colocalization in early endosomes. Interacts with SNX27 (via PDZ domain); the interaction is required for recycling to the plasma membrane when endocytosed and prevent degradation in lysosomes. Interacts (via PDZ-binding motif) with SHANK3 (via PDZ domain). Interacts with CACNG3; associates GRIA1 with the adapter protein complex 4 (AP-4) to target GRIA1 to the somatodendritic compartment of neurons. Interacts with CACNG2; this interaction mediates traffick to the plasma membrane and modulation of desensitization. Interaction with CNIH2 and CNIH3; this interaction promotes expression at the plasma membrane and extensively modulates their gating properties by slowing deactivation and desensitization kinetics. Found in a complex with GRIA2, GRIA3, GRIA4, DLG4, CACNG8 and CNIH2. Post-translationally, phosphorylated at Ser-645. Phosphorylated at Ser-710 by PKC. Phosphorylated at Ser-849 by PKC, PKA and CAMK2. Phosphorylated at Ser-863 by PKC, PKA and PRKG2. Phosphorylation of Ser-863 is reduced by induction of long-term depression and increased by induction of long-term potentiation. In terms of processing, palmitoylated. Depalmitoylated by CPT1C and upon L-glutamate stimulation. ZDHHC3/GODZ specifically palmitoylates Cys-603, which leads to Golgi retention and decreased cell surface expression. In contrast, Cys-829 palmitoylation does not affect cell surface expression but regulates stimulation-dependent endocytosis. Detected in cerebellum (at protein level).

It is found in the cell membrane. The protein resides in the endoplasmic reticulum membrane. It localises to the postsynaptic cell membrane. Its subcellular location is the postsynaptic density membrane. The protein localises to the cell projection. It is found in the dendrite. The protein resides in the dendritic spine. It localises to the early endosome membrane. Its subcellular location is the recycling endosome membrane. The protein localises to the presynapse. It is found in the synapse. It carries out the reaction Ca(2+)(in) = Ca(2+)(out). It catalyses the reaction Na(+)(in) = Na(+)(out). The catalysed reaction is Mg(2+)(in) = Mg(2+)(out). The enzyme catalyses Li(+)(in) = Li(+)(out). It carries out the reaction K(+)(in) = K(+)(out). It catalyses the reaction Sr(2+)(in) = Sr(2+)(out). Glutamate-gated receptor activity inhibited by DNQX (6,7-dinitroquinoxaline-2,3-dione). Its function is as follows. Ionotropic glutamate receptor that functions as a ligand-gated cation channel, gated by L-glutamate and glutamatergic agonists such as alpha-amino-3-hydroxy-5-methyl-4-isoxazolepropionic acid (AMPA), quisqualic acid, and kainic acid. L-glutamate acts as an excitatory neurotransmitter at many synapses in the central nervous system. Binding of the excitatory neurotransmitter L-glutamate induces a conformation change, leading to the opening of the cation channel, and thereby converts the chemical signal to an electrical impulse upon entry of monovalent and divalent cations such as sodium and calcium. The receptor then desensitizes rapidly and enters in a transient inactive state, characterized by the presence of bound agonist. In the presence of CACNG2 or CACNG4 or CACNG7 or CACNG8, shows resensitization which is characterized by a delayed accumulation of current flux upon continued application of L-glutamate. Resensitization is blocked by CNIH2 through interaction with CACNG8 in the CACNG8-containing AMPA receptors complex. Calcium (Ca(2+)) permeability depends on subunits composition and, heteromeric channels containing edited GRIA2 subunit are calcium-impermeable. Also permeable to other divalents cations such as strontium(2+) and magnesium(2+) and monovalent cations such as potassium(1+) and lithium(1+). The sequence is that of Glutamate receptor 1 from Rattus norvegicus (Rat).